Consider the following 661-residue polypeptide: Pentatricopeptide repeat-containing protein At3g04750, mitochondrial (661 aa).

Residues 1–18 constitute a mitochondrion transit peptide; that stretch reads MCFVLLLRRGFRLFGTEC. PPR repeat units lie at residues 99-131, 132-163, 165-195, 196-230, 231-265, 268-298, 299-333, 334-366, 367-401, 402-432, 433-467, 468-498, and 504-539; these read NVFV…RVSP, DRQT…GCLS, GNYL…MPHP, DVSS…GIEP, DEYT…GPVY, NLIL…MKKK, DMRS…DLVS, WNSL…KVKP, DRVT…QLKG, DAFL…ATEK, DVAL…GVTP, NNVT…MKDK, and ETEH…PSQS. Residues 540–615 are type E motif; sequence MWGSILSACR…TAGYSSVVGV (76 aa). The tract at residues 616 to 647 is type E(+) motif; sequence EGLHRFVAAEKQNHPRWTEIKRILQHLYNEMK.

This sequence belongs to the PPR family. PCMP-E subfamily.

The protein resides in the mitochondrion. The sequence is that of Pentatricopeptide repeat-containing protein At3g04750, mitochondrial (PCMP-E81) from Arabidopsis thaliana (Mouse-ear cress).